The following is a 161-amino-acid chain: Suppressor of kinetochore protein 1 (161 aa).

The tract at residues 102 to 161 (VLASNYLDIKPLLDTGCKTVANMIRGKSPEDIRKTFNIPNDFTPEEEEQIRKENEWAEDR) is interaction with the F-box domain of F-box proteins.

The protein belongs to the SKP1 family. Essential component of the E3 ubiquitin ligase Skp1-Cullin-1-F-box (SCF) complex. Interacts with cul1, fbh1, mcs2, pip1, pof1, pof2, pof3, pof4, pof5, pof6, pof7, pof8, pof9, pof10, pof11, pof12, pof13, pof14, pop1, pop2 and tfb3. Forms a complex with pof6 and sip1. Component of the RAVE complex composed of rav1, rav2 and skp1.

Its subcellular location is the cytoplasm. It localises to the nucleus. Its function is as follows. Required for cig2 degradation in the G2 and M phases of the cell cycle. Together with pof6, essential for septum processing and cell separation. Involved in mitotic progression, essential for the execution of anaphase B; required for coordinated structural alterations of mitotic spindles and segregation of nuclear membrane structures at anaphase. Involved in the DNA damage checkpoint pathway and maintenance of genome integrity. Component of the RAVE complex which is required for stable assembly of the vacuolar ATPase complex V-ATPase. In Schizosaccharomyces pombe (strain 972 / ATCC 24843) (Fission yeast), this protein is Suppressor of kinetochore protein 1.